We begin with the raw amino-acid sequence, 580 residues long: Type 3 secretion system translocon protein SctE (580 aa).

IpgC chaperone binding domain stretches follow at residues 15–45 (KILT…IADL) and 51–72 (INTT…APKS). The interval 61-70 (NILIPELKAP) is mediates interaction with human MAD2L2. A coiled-coil region spans residues 104–224 (AWKSQQQARQ…MQLEKEIDSF (121 aa)). A run of 2 helical transmembrane segments spans residues 313–333 (ILGA…GGAS) and 399–419 (IGSI…VVLV).

The protein belongs to the SctE/SipB/YopB family. The core secretion machinery of the T3SS is composed of approximately 20 different proteins, including cytoplasmic components, a base, an export apparatus and a needle. This subunit is involved in the formation of a pore, called the translocon, in host membrane. Interacts with IpaC/SctB. Interacts with the needle tip protein IpaD/SctA. Interacts with the molecular chaperone IpgC, which prevents premature association with IpaC/SctB within the cytoplasm of Shigella cells and protects IpaB/SctE from proteolysis. Interacts with the host protein ICE in the cytoplasm of infected macrophages. Interacts with human MAD2L2 in the G2/M phase of the cell cycle.

Its subcellular location is the secreted. The protein resides in the host membrane. It is found in the host cell. The protein localises to the host nucleus. Interaction with the membrane is affected by the pH. IpaB/SctE is more efficient in destabilizing the membrane at pH 5.0 than at neutral pH. Component of the type III secretion system (T3SS), also called injectisome, which is used to inject bacterial effector proteins into eukaryotic host cells. IpaB/SctE and IpaC/SctB are inserted into the host membrane where they form a pore and allow the translocation of effector proteins into the cytosol of target cells. Interaction with IpaD/SctA at needle tips leads to the formation of the MxiH/SctF-IpaD/SctA-IpaB/SctE ternary complex, which is essential for host cell sensing. Interaction of IpaB/SctE with host membrane lipids promotes recruitment of IpaC/SctB at the needle tip concomitant with translocon insertion into the host membrane and type III secretion induction. Its function is as follows. Required for efficient dissemination. Necessary for lysis of the two cellular membranes that surround bacteria in protrusions during cell-to-cell spread. Is sufficient to induce macrophage apoptosis through activation of the interleukin-1 beta converting enzyme (ICE) in infected macrophages. In epithelial cells, causes cell-cycle arrest by targeting host MAD2L2, an anaphase-promoting complex/cyclosome (APC) inhibitor. This is Type 3 secretion system translocon protein SctE from Shigella flexneri.